We begin with the raw amino-acid sequence, 362 residues long: Porin Omp2b (362 aa).

The first 22 residues, Met1–Ala22, serve as a signal peptide directing secretion.

The protein belongs to the alphaproteobacteria porin family. In terms of assembly, homotrimer.

It is found in the cell outer membrane. Functionally, forms passive diffusion pores that allow small molecular weight hydrophilic materials across the outer membrane. The sequence is that of Porin Omp2b (omp2b) from Brucella neotomae.